Reading from the N-terminus, the 95-residue chain is Large ribosomal subunit protein uL23c (95 aa).

The protein belongs to the universal ribosomal protein uL23 family. As to quaternary structure, part of the 50S ribosomal subunit.

The protein localises to the plastid. It localises to the chloroplast. In terms of biological role, binds to 23S rRNA. This Guillardia theta (Cryptophyte) protein is Large ribosomal subunit protein uL23c (rpl23).